A 362-amino-acid polypeptide reads, in one-letter code: Dual-specificity RNA methyltransferase RlmN (362 aa).

The Proton acceptor role is filled by Glu-100. A Radical SAM core domain is found at 106–345; sequence EPDRNTLCIS…VFIRNSRGED (240 aa). An intrachain disulfide couples Cys-113 to Cys-350. Residues Cys-120, Cys-124, and Cys-127 each coordinate [4Fe-4S] cluster. S-adenosyl-L-methionine-binding positions include 177 to 178, Ser-209, 231 to 233, and Asn-307; these read GE and SLH. Cys-350 (S-methylcysteine intermediate) is an active-site residue.

The protein belongs to the radical SAM superfamily. RlmN family. The cofactor is [4Fe-4S] cluster.

The protein localises to the cytoplasm. It carries out the reaction adenosine(2503) in 23S rRNA + 2 reduced [2Fe-2S]-[ferredoxin] + 2 S-adenosyl-L-methionine = 2-methyladenosine(2503) in 23S rRNA + 5'-deoxyadenosine + L-methionine + 2 oxidized [2Fe-2S]-[ferredoxin] + S-adenosyl-L-homocysteine. The enzyme catalyses adenosine(37) in tRNA + 2 reduced [2Fe-2S]-[ferredoxin] + 2 S-adenosyl-L-methionine = 2-methyladenosine(37) in tRNA + 5'-deoxyadenosine + L-methionine + 2 oxidized [2Fe-2S]-[ferredoxin] + S-adenosyl-L-homocysteine. In terms of biological role, specifically methylates position 2 of adenine 2503 in 23S rRNA and position 2 of adenine 37 in tRNAs. m2A2503 modification seems to play a crucial role in the proofreading step occurring at the peptidyl transferase center and thus would serve to optimize ribosomal fidelity. The polypeptide is Dual-specificity RNA methyltransferase RlmN (Desulfotalea psychrophila (strain LSv54 / DSM 12343)).